A 250-amino-acid polypeptide reads, in one-letter code: ATP synthase subunit a (250 aa).

5 helical membrane-spanning segments follow: residues T27–L47, I83–W103, I129–W149, I191–A211, and F219–F239.

Belongs to the ATPase A chain family. F-type ATPases have 2 components, CF(1) - the catalytic core - and CF(0) - the membrane proton channel. CF(1) has five subunits: alpha(3), beta(3), gamma(1), delta(1), epsilon(1). CF(0) has three main subunits: a(1), b(2) and c(9-12). The alpha and beta chains form an alternating ring which encloses part of the gamma chain. CF(1) is attached to CF(0) by a central stalk formed by the gamma and epsilon chains, while a peripheral stalk is formed by the delta and b chains.

The protein resides in the cell membrane. Its function is as follows. Key component of the proton channel; it plays a direct role in the translocation of protons across the membrane. This Mycobacterium marinum (strain ATCC BAA-535 / M) protein is ATP synthase subunit a.